The following is a 145-amino-acid chain: Transcriptional regulator MraZ (145 aa).

SpoVT-AbrB domains lie at 7–54 and 83–126; these read NATN…GPDL and GVFM…QPQA.

This sequence belongs to the MraZ family. As to quaternary structure, forms oligomers.

It is found in the cytoplasm. It localises to the nucleoid. This is Transcriptional regulator MraZ from Rhizobium leguminosarum bv. trifolii (strain WSM2304).